Consider the following 287-residue polypeptide: Inorganic pyrophosphatase (287 aa).

Residue Arg79 participates in diphosphate binding. 3 residues coordinate Mg(2+): Asp116, Asp121, and Asp153.

This sequence belongs to the PPase family. Requires Mg(2+) as cofactor.

It localises to the cytoplasm. It carries out the reaction diphosphate + H2O = 2 phosphate + H(+). This is Inorganic pyrophosphatase (IPP1) from Zygosaccharomyces bailii.